We begin with the raw amino-acid sequence, 484 residues long: MTATATEQGARTAAATGRIARVIGPVVDVEFPADAIPGIYHALTAEITLNGATHAVTFEVSQHLGDNLVRAISLQTTDGLVRGAVVTDTGAPISVPVGDGVKGHIFNVLGQPLDVAESEIQYTERWPIHRKPPSFDQLEGSTEMLETGIKSIDLLTPYIKGGKIGLFGGAGVGKTVLIQEMITRVARNFGGTSVFAGVGERTREGNDLWVEMEESGVLKDTALVFGQMDEPPGTRLRVALSALTMAEYFRDVQNQDVLLFIDNIFRFTQAGSEVSTLLGRMPSAVGYQPNLADEMGLLQERITSTKGRSITSMQAVYVPADDYTDPAPAATFAHLDATTELSREIASRGLYPAIDPLTSTSRILDPQYIGKDHYDTAVRVKQILQKNKELQDIIAVLGVDELSEEDKIVVSRARRIQQFLSQNTYTAKQFTGVEGSTVSIKDTVEGFTAICNGDVDHIAEQAFFNVGAMDDVERQWAKIQESTK.

ATP is bound at residue 168-175 (GGAGVGKT).

The protein belongs to the ATPase alpha/beta chains family. F-type ATPases have 2 components, CF(1) - the catalytic core - and CF(0) - the membrane proton channel. CF(1) has five subunits: alpha(3), beta(3), gamma(1), delta(1), epsilon(1). CF(0) has three main subunits: a(1), b(2) and c(9-12). The alpha and beta chains form an alternating ring which encloses part of the gamma chain. CF(1) is attached to CF(0) by a central stalk formed by the gamma and epsilon chains, while a peripheral stalk is formed by the delta and b chains.

It localises to the cell membrane. It carries out the reaction ATP + H2O + 4 H(+)(in) = ADP + phosphate + 5 H(+)(out). Its function is as follows. Produces ATP from ADP in the presence of a proton gradient across the membrane. The catalytic sites are hosted primarily by the beta subunits. In Renibacterium salmoninarum (strain ATCC 33209 / DSM 20767 / JCM 11484 / NBRC 15589 / NCIMB 2235), this protein is ATP synthase subunit beta.